The primary structure comprises 68 residues: Protein VNG_1110C (68 aa).

This Halobacterium salinarum (strain ATCC 700922 / JCM 11081 / NRC-1) (Halobacterium halobium) protein is Protein VNG_1110C.